Here is a 1259-residue protein sequence, read N- to C-terminus: Bud site selection protein 4 homolog (1259 aa).

Disordered stretches follow at residues 185 to 416 (YDRG…MVKP), 428 to 455 (LHLG…DAMK), and 862 to 902 (SGLG…KKRT). Over residues 247 to 267 (ATDKRSLTDKTVPDNRGENER) the composition is skewed to basic and acidic residues. The segment covering 277–289 (RNPSIETGTTDEY) has biased composition (polar residues). 2 stretches are compositionally biased toward basic and acidic residues: residues 305–324 (DDSK…KPQR) and 368–391 (IRDR…DHEL). The span at 397 to 411 (SARTNSSASGNSSDS) shows a compositional bias: low complexity. The PH domain occupies 1128–1239 (AIAMEGFMWQ…WIEKLRKVIE (112 aa)).

It belongs to the BUD4 family.

It localises to the cell septum. Its function is as follows. May be involved in the septin organization at the site of septation. In Eremothecium gossypii (strain ATCC 10895 / CBS 109.51 / FGSC 9923 / NRRL Y-1056) (Yeast), this protein is Bud site selection protein 4 homolog (BUD4).